A 220-amino-acid polypeptide reads, in one-letter code: Metalloproteinase inhibitor 2 (220 aa).

An N-terminal signal peptide occupies residues 1–26 (MGAAARSLPLAFCLLLLGTLLPRADA). Zn(2+) is bound at residue C27. Residues 27–30 (CSCS) form an involved in metalloproteinase-binding region. 6 cysteine pairs are disulfide-bonded: C27-C98, C29-C127, C39-C152, C154-C201, C159-C164, and C172-C193. The NTR domain maps to 27 to 152 (CSCSPVHPQQ…SLNHRYQMGC (126 aa)).

This sequence belongs to the protease inhibitor I35 (TIMP) family. In terms of assembly, interacts (via the C-terminal) with MMP2 (via the C-terminal PEX domain); the interaction inhibits the MMP2 activity. In terms of processing, the activity of TIMP2 is dependent on the presence of disulfide bonds.

It localises to the secreted. In terms of biological role, complexes with metalloproteinases (such as collagenases) and irreversibly inactivates them by binding to their catalytic zinc cofactor. This is Metalloproteinase inhibitor 2 (TIMP2) from Bos taurus (Bovine).